The primary structure comprises 796 residues: Peroxisome proliferator-activated receptor gamma coactivator 1-alpha (796 aa).

At lysine 77 the chain carries N6-acetyllysine. The tract at residues 98–138 is disordered; it reads PVDEDGLPSFDALTDGDVTTENEASPSSMPDGTPPPQEAEE. Residues 114 to 127 are compositionally biased toward polar residues; sequence DVTTENEASPSSMP. The short motif at 142 to 146 is the LXXLL motif element; sequence LKKLL. Position 144 is an N6-acetyllysine (lysine 144). Position 176 is a phosphothreonine; by AMPK (threonine 176). An N6-acetyllysine modification is found at lysine 182. The interval 211–275 is disordered; that stretch reads YLTTNDDPPH…NDPKGSPFEN (65 aa). Residues 217–235 show a composition bias toward basic and acidic residues; sequence DPPHTKPTENRNSSRDKCT. A compositionally biased stretch (polar residues) spans 242-258; sequence TQSQTQHLQAKPTTLSL. Lysine 252, lysine 269, lysine 276, and lysine 319 each carry N6-acetyllysine. 2 disordered regions span residues 288–374 and 398–452; these read GTAG…AKRP and TSQE…RKQL. The segment at 291-337 is interaction with PPARG; that stretch reads GLTPPTTPPHKANQDNPFRASPKLKPSCKTVVPPPSKKARYSESSCT. The segment covering 332–344 has biased composition (polar residues); that stretch reads SESSCTQGSNSTK. Lysine 345 and lysine 411 each carry N6-acetyllysine. The interval 348-796 is mediates interaction with RNF34; the sequence is EQSELYAQLS…LKEAQRSLRR (449 aa). Residues 401–412 are compositionally biased toward basic and acidic residues; sequence ELHDSRQLENKD. 2 stretches are compositionally biased toward polar residues: residues 413–428 and 439–450; these read APSS…STDS and VSRQVSPGSTRK. N6-acetyllysine is present on lysine 450. Phosphoserine; by AMPK is present on serine 538. Disordered stretches follow at residues 542–597, 609–637, and 648–667; these read FNSP…SSSR, HRTH…SYEE, and YRRE…ERQR. Basic residues predominate over residues 562–577; it reads QRMRSRSRSFSRHRSC. Residues 578-597 are compositionally biased toward low complexity; that stretch reads SRSPYSRSRSRSPGSRSSSR. The RRM domain maps to 675 to 751; sequence RVIYVGKIRP…TDFELYFCGR (77 aa). Residues lysine 756 and lysine 777 each carry the N6-acetyllysine modification.

Homooligomer. Interacts with MYBBP1A; inhibits MYBBP1A transcriptional activation. Interacts with PRDM16, LPIN1 and PML. Interacts (via LXXLL motif) with RORA and RORC (via AF-2 motif); activates RORA and RORC transcriptional activation. Interacts with LRPPRC. Interacts with FOXO1. Interacts with NR5A2. Phosphorylation by AMPK in skeletal muscle increases activation of its own promoter. Phosphorylated by CLK2. In terms of processing, heavily acetylated by KAT2A/GCN5 under conditions of high nutrients, leading to inactivation of PPARGC1A. Deacetylated by SIRT1 in low nutrients/high NAD conditions, leading to its activation. Post-translationally, ubiquitinated. Ubiquitination by RNF34 induces proteasomal degradation.

It is found in the nucleus. Its subcellular location is the PML body. Functionally, transcriptional coactivator for steroid receptors and nuclear receptors. Greatly increases the transcriptional activity of PPARG and thyroid hormone receptor on the uncoupling protein promoter. Can regulate key mitochondrial genes that contribute to the program of adaptive thermogenesis. Plays an essential role in metabolic reprogramming in response to dietary availability through coordination of the expression of a wide array of genes involved in glucose and fatty acid metabolism. Acts as a key regulator of gluconeogenesis: stimulates hepatic gluconeogenesis by increasing the expression of gluconeogenic enzymes, and acting together with FOXO1 to promote the fasting gluconeogenic program. Induces the expression of PERM1 in the skeletal muscle in an ESRRA-dependent manner. Also involved in the integration of the circadian rhythms and energy metabolism. Required for oscillatory expression of clock genes, such as BMAL1 and NR1D1, through the coactivation of RORA and RORC, and metabolic genes, such as PDK4 and PEPCK. The polypeptide is Peroxisome proliferator-activated receptor gamma coactivator 1-alpha (PPARGC1A) (Bos taurus (Bovine)).